A 217-amino-acid polypeptide reads, in one-letter code: Glycerol-3-phosphate acyltransferase (217 aa).

5 helical membrane-spanning segments follow: residues 1-21, 54-74, 84-104, 126-146, and 165-185; these read MAWA…SIPT, TAAI…VGGV, AIVP…AAIL, VLLV…LFML, and LLML…LAGI.

It belongs to the PlsY family. In terms of assembly, probably interacts with PlsX.

The protein resides in the cell inner membrane. It catalyses the reaction an acyl phosphate + sn-glycerol 3-phosphate = a 1-acyl-sn-glycero-3-phosphate + phosphate. The protein operates within lipid metabolism; phospholipid metabolism. Its function is as follows. Catalyzes the transfer of an acyl group from acyl-phosphate (acyl-PO(4)) to glycerol-3-phosphate (G3P) to form lysophosphatidic acid (LPA). This enzyme utilizes acyl-phosphate as fatty acyl donor, but not acyl-CoA or acyl-ACP. The sequence is that of Glycerol-3-phosphate acyltransferase from Rippkaea orientalis (strain PCC 8801 / RF-1) (Cyanothece sp. (strain PCC 8801)).